Consider the following 153-residue polypeptide: Pheromone-binding protein Gp-9 (153 aa).

Positions 1–19 are cleaved as a signal peptide; it reads MKTFVLHIFIFALVAFASA. 3 disulfides stabilise this stretch: Cys-37-Cys-77, Cys-73-Cys-129, and Cys-118-Cys-138.

It belongs to the PBP/GOBP family. Homodimer.

The protein localises to the secreted. Its function is as follows. Colony queen number, a major feature of social organization, is associated with worker genotype for Gp-9. Colonies are headed by either a single reproductive queen (monogyne form) or multiple queens (polygyne form). Differences in worker Gp-9 genotypes between social forms may cause differences in workers' abilities to recognize queens and regulate their numbers. This chain is Pheromone-binding protein Gp-9, found in Solenopsis electra (Fire ant).